The chain runs to 241 residues: 4-hydroxy-tetrahydrodipicolinate reductase (241 aa).

NAD(+) is bound by residues 7–12 (GVNGHM), 74–76 (GTT), and 98–101 (STNM). His131 acts as the Proton donor/acceptor in catalysis. His132 provides a ligand contact to (S)-2,3,4,5-tetrahydrodipicolinate. Lys135 acts as the Proton donor in catalysis. A (S)-2,3,4,5-tetrahydrodipicolinate-binding site is contributed by 141–142 (GS).

Belongs to the DapB family.

The protein localises to the cytoplasm. It carries out the reaction (S)-2,3,4,5-tetrahydrodipicolinate + NAD(+) + H2O = (2S,4S)-4-hydroxy-2,3,4,5-tetrahydrodipicolinate + NADH + H(+). It catalyses the reaction (S)-2,3,4,5-tetrahydrodipicolinate + NADP(+) + H2O = (2S,4S)-4-hydroxy-2,3,4,5-tetrahydrodipicolinate + NADPH + H(+). It participates in amino-acid biosynthesis; L-lysine biosynthesis via DAP pathway; (S)-tetrahydrodipicolinate from L-aspartate: step 4/4. Its function is as follows. Catalyzes the conversion of 4-hydroxy-tetrahydrodipicolinate (HTPA) to tetrahydrodipicolinate. This chain is 4-hydroxy-tetrahydrodipicolinate reductase, found in Alkaliphilus oremlandii (strain OhILAs) (Clostridium oremlandii (strain OhILAs)).